Consider the following 640-residue polypeptide: Fructose-1,6-bisphosphatase class 3 (640 aa).

This sequence belongs to the FBPase class 3 family. Mn(2+) is required as a cofactor.

The enzyme catalyses beta-D-fructose 1,6-bisphosphate + H2O = beta-D-fructose 6-phosphate + phosphate. It participates in carbohydrate biosynthesis; gluconeogenesis. The polypeptide is Fructose-1,6-bisphosphatase class 3 (Lactococcus lactis subsp. lactis (strain IL1403) (Streptococcus lactis)).